Reading from the N-terminus, the 375-residue chain is Peptide chain release factor 1 (375 aa).

Gln-237 is modified (N5-methylglutamine). The segment covering 289-299 (AAREAQERQER) has biased composition (basic and acidic residues). Residues 289 to 326 (AAREAQERQERASQVGSGDRSEKIRTYNYPQNRVTDHR) are disordered.

Belongs to the prokaryotic/mitochondrial release factor family. Methylated by PrmC. Methylation increases the termination efficiency of RF1.

The protein resides in the cytoplasm. Its function is as follows. Peptide chain release factor 1 directs the termination of translation in response to the peptide chain termination codons UAG and UAA. In Deinococcus radiodurans (strain ATCC 13939 / DSM 20539 / JCM 16871 / CCUG 27074 / LMG 4051 / NBRC 15346 / NCIMB 9279 / VKM B-1422 / R1), this protein is Peptide chain release factor 1 (prfA).